Consider the following 914-residue polypeptide: DENN domain-containing protein 2C (914 aa).

The tract at residues 46–98 (FGVRYNCHQESPPHKRPTGEERNGALPRNTDVKSRDQSEDEGEGGECRGSHPS) is disordered. A compositionally biased stretch (basic and acidic residues) spans 56-68 (SPPHKRPTGEERN). The residue at position 261 (Ser-261) is a Phosphoserine. The tract at residues 411–446 (GKKRVKLQPYTGKEAPSSKGETSGNESDAEYLPKNR) is disordered. One can recognise a uDENN domain in the interval 480–627 (ELFVVVSLQK…PFPAPGRTIT (148 aa)). One can recognise a cDENN domain in the interval 649-782 (RLEHVDFECL…LQAALVQILE (134 aa)). The dDENN domain occupies 784 to 874 (RDEVLAQEQQ…QDRELRQSGV (91 aa)).

Functionally, guanine nucleotide exchange factor (GEF) which may activate RAB9A and RAB9B. Promotes the exchange of GDP to GTP, converting inactive GDP-bound Rab proteins into their active GTP-bound form. The protein is DENN domain-containing protein 2C (Dennd2c) of Mus musculus (Mouse).